Consider the following 638-residue polypeptide: Chaperone protein DnaK (638 aa).

Position 199 is a phosphothreonine; by autocatalysis (T199). The span at 603-618 (YAQPGAEAGAEQQGSA) shows a compositional bias: low complexity. The interval 603–638 (YAQPGAEAGAEQQGSANNADDDIVDAEFEEVNDDKK) is disordered. Residues 621–638 (ADDDIVDAEFEEVNDDKK) show a composition bias toward acidic residues.

It belongs to the heat shock protein 70 family.

In terms of biological role, acts as a chaperone. The polypeptide is Chaperone protein DnaK (Hydrogenovibrio crunogenus (strain DSM 25203 / XCL-2) (Thiomicrospira crunogena)).